We begin with the raw amino-acid sequence, 294 residues long: 4-hydroxy-tetrahydrodipicolinate synthase (294 aa).

T47 provides a ligand contact to pyruvate. Y135 functions as the Proton donor/acceptor in the catalytic mechanism. Catalysis depends on K163, which acts as the Schiff-base intermediate with substrate. Position 205 (I205) interacts with pyruvate.

It belongs to the DapA family. Homotetramer; dimer of dimers.

It localises to the cytoplasm. It catalyses the reaction L-aspartate 4-semialdehyde + pyruvate = (2S,4S)-4-hydroxy-2,3,4,5-tetrahydrodipicolinate + H2O + H(+). It participates in amino-acid biosynthesis; L-lysine biosynthesis via DAP pathway; (S)-tetrahydrodipicolinate from L-aspartate: step 3/4. Catalyzes the condensation of (S)-aspartate-beta-semialdehyde [(S)-ASA] and pyruvate to 4-hydroxy-tetrahydrodipicolinate (HTPA). This is 4-hydroxy-tetrahydrodipicolinate synthase from Rickettsia typhi (strain ATCC VR-144 / Wilmington).